A 470-amino-acid polypeptide reads, in one-letter code: Velvet complex subunit B (470 aa).

Disordered regions lie at residues 1-148 (MNSS…EEGT) and 223-321 (VRSS…NPLF). The span at 15 to 37 (PGPGYSSSVPPPIHAYQQQQQHQ) shows a compositional bias: low complexity. The segment covering 38 to 49 (HPPPSLLPPPPT) has biased composition (pro residues). Residues 74–86 (HQHHAPPPPHHHS) are compositionally biased toward basic residues. Pro residues predominate over residues 102–124 (NQYPRPHPLPPSRNDEPPPPSSE). The 306-residue stretch at 147–452 (GTGLKYSLDV…ALQGIKIPIR (306 aa)) folds into the Velvet domain. A compositionally biased stretch (low complexity) spans 232–241 (GASSNNYSYS). Over residues 242–255 (TLEPSTPSYQQQAL) the composition is skewed to polar residues. Over residues 280 to 301 (QQGYGQAPSYQSSSSYGPPQQY) the composition is skewed to low complexity. Residues 307 to 318 (GYNTDPPASSAN) are compositionally biased toward polar residues.

This sequence belongs to the velvet family. VelB subfamily. As to quaternary structure, component of the heterotrimeric velvet complex composed of laeA, veA and velB; VeA acting as a bridging protein between laeA and velB. Forms a heterodimeric complex with vosA; the formation of the velB-vosA complex is light-dependent.

It is found in the nucleus. It localises to the cytoplasm. Its function is as follows. Component of the velvet transcription factor complex that controls sexual/asexual developmental ratio in response to light, promoting sexual development in the darkness while stimulating asexual sporulation under illumination. The velvet complex acts as a global regulator for secondary metabolite gene expression. Component of the velB-VosA heterodimeric complex that plays a dual role in activating genes associated with spore maturation and repressing certain development-associated genes. The complex binds DNA through the DNA-binding domain of vosA that recognizes an 11-nucleotide consensus sequence 5'-CTGGCCGCGGC-3' consisting of two motifs in the promoters of key developmental regulatory genes. Controls the expression of the pink pigment aurofusarin and the mycotoxin deoxynivalenol gene clusters. Regulates hyphae formation, hyphal hydrophobicity and conidiation. Regulates of cell wall integrity and pathogenicity. In Gibberella zeae (strain ATCC MYA-4620 / CBS 123657 / FGSC 9075 / NRRL 31084 / PH-1) (Wheat head blight fungus), this protein is Velvet complex subunit B.